The following is a 63-amino-acid chain: Large ribosomal subunit protein bL28 (63 aa).

The protein belongs to the bacterial ribosomal protein bL28 family.

The sequence is that of Large ribosomal subunit protein bL28 from Petrotoga mobilis (strain DSM 10674 / SJ95).